The chain runs to 340 residues: Protein-arginine kinase (340 aa).

The Phosphagen kinase C-terminal domain maps to 21 to 242; sequence VVLSSRIRLA…EQIIMQERVA (222 aa). Residues 24-28, histidine 79, arginine 113, 164-168, and 195-200 contribute to the ATP site; these read SSRIR, RASVM, and RGIYGE.

The protein belongs to the ATP:guanido phosphotransferase family.

It catalyses the reaction L-arginyl-[protein] + ATP = N(omega)-phospho-L-arginyl-[protein] + ADP + H(+). Catalyzes the specific phosphorylation of arginine residues in proteins. The polypeptide is Protein-arginine kinase (Listeria monocytogenes serovar 1/2a (strain ATCC BAA-679 / EGD-e)).